Consider the following 69-residue polypeptide: DNA-directed RNA polymerase subunit epsilon (69 aa).

Belongs to the RNA polymerase subunit epsilon family. RNAP is composed of a core of 2 alpha, a beta and a beta' subunit. The core is associated with a delta subunit, and at least one of epsilon or omega. When a sigma factor is associated with the core the holoenzyme is formed, which can initiate transcription.

The enzyme catalyses RNA(n) + a ribonucleoside 5'-triphosphate = RNA(n+1) + diphosphate. In terms of biological role, a non-essential component of RNA polymerase (RNAP). This chain is DNA-directed RNA polymerase subunit epsilon, found in Bacillus velezensis (strain DSM 23117 / BGSC 10A6 / LMG 26770 / FZB42) (Bacillus amyloliquefaciens subsp. plantarum).